The sequence spans 462 residues: Fumarate hydratase class II (462 aa).

Substrate contacts are provided by residues 97–99 (SGT), 127–130 (HPND), 137–139 (SSN), and threonine 185. Residue histidine 186 is the Proton donor/acceptor of the active site. Residue serine 316 is part of the active site. Substrate contacts are provided by residues serine 317 and 322–324 (KVN).

This sequence belongs to the class-II fumarase/aspartase family. Fumarase subfamily. As to quaternary structure, homotetramer.

It localises to the cytoplasm. It carries out the reaction (S)-malate = fumarate + H2O. The protein operates within carbohydrate metabolism; tricarboxylic acid cycle; (S)-malate from fumarate: step 1/1. Its function is as follows. Involved in the TCA cycle. Catalyzes the stereospecific interconversion of fumarate to L-malate. This is Fumarate hydratase class II from Bacillus cereus (strain ATCC 14579 / DSM 31 / CCUG 7414 / JCM 2152 / NBRC 15305 / NCIMB 9373 / NCTC 2599 / NRRL B-3711).